The primary structure comprises 626 residues: SHC-transforming protein 4 (626 aa).

Positions 1 to 185 (MRERSQDSQA…KQDGPPLQHL (185 aa)) are CH2. Disordered regions lie at residues 38–76 (ITSL…TVSS) and 119–182 (LQEN…GPPL). Residues 120–139 (QENQDQTPSRPASPESNLNR) show a composition bias toward polar residues. In terms of domain architecture, PID spans 186–369 (LGNGLNYCVR…LVDGAPEDRD (184 aa)). The CH1 stretch occupies residues 370–521 (HDYYNSIPGK…HIRQQLWDEE (152 aa)). Position 422 is a phosphotyrosine (Y422). Positions 522 to 613 (CFHGKLSRGA…GSEVRLKQPI (92 aa)) constitute an SH2 domain.

In terms of assembly, interacts (via PID domain) with phosphorylated MUSK (via NPXY motif); undergoes tyrosine phosphorylation downstream of activated MUSK. Interacts with GRB2; the interaction is dependent of Tyr-422 phosphorylation and increased by EGF. Post-translationally, phosphorylated; the phosphorylation is enhanced by EGF. Phosphorylation at Tyr-422 is required for the interaction with GRB2. Expressed in both brain and skeletal muscle; widely expressed in brain namely olfactory bulb, cortex, hippocampus, striatum, thalamus, and brain stem (at protein level). Only expressed in melanomas. Weakly expressed in normal melanocytes and benign nevi. Highly expressed at the transition from radial growth phase to vertical growth phase and metastatic melanomas, when tumor cells acquire migratory competence and invasive potential.

The protein localises to the postsynaptic cell membrane. Activates both Ras-dependent and Ras-independent migratory pathways in melanomas. Contributes to the early phases of agrin-induced tyrosine phosphorylation of CHRNB1. The protein is SHC-transforming protein 4 (Shc4) of Mus musculus (Mouse).